A 134-amino-acid polypeptide reads, in one-letter code: Large ribosomal subunit protein eL32 (134 aa).

It belongs to the eukaryotic ribosomal protein eL32 family.

In Picrophilus torridus (strain ATCC 700027 / DSM 9790 / JCM 10055 / NBRC 100828 / KAW 2/3), this protein is Large ribosomal subunit protein eL32 (rpl32e).